A 197-amino-acid polypeptide reads, in one-letter code: Nucleoside triphosphate pyrophosphatase (197 aa).

The Proton acceptor role is filled by aspartate 71.

Belongs to the Maf family. The cofactor is a divalent metal cation.

It localises to the cytoplasm. It carries out the reaction a ribonucleoside 5'-triphosphate + H2O = a ribonucleoside 5'-phosphate + diphosphate + H(+). It catalyses the reaction a 2'-deoxyribonucleoside 5'-triphosphate + H2O = a 2'-deoxyribonucleoside 5'-phosphate + diphosphate + H(+). Nucleoside triphosphate pyrophosphatase. May have a dual role in cell division arrest and in preventing the incorporation of modified nucleotides into cellular nucleic acids. This chain is Nucleoside triphosphate pyrophosphatase, found in Trichormus variabilis (strain ATCC 29413 / PCC 7937) (Anabaena variabilis).